Here is a 95-residue protein sequence, read N- to C-terminus: Aspartyl/glutamyl-tRNA(Asn/Gln) amidotransferase subunit C (95 aa).

This sequence belongs to the GatC family. As to quaternary structure, heterotrimer of A, B and C subunits.

The catalysed reaction is L-glutamyl-tRNA(Gln) + L-glutamine + ATP + H2O = L-glutaminyl-tRNA(Gln) + L-glutamate + ADP + phosphate + H(+). It catalyses the reaction L-aspartyl-tRNA(Asn) + L-glutamine + ATP + H2O = L-asparaginyl-tRNA(Asn) + L-glutamate + ADP + phosphate + 2 H(+). Its function is as follows. Allows the formation of correctly charged Asn-tRNA(Asn) or Gln-tRNA(Gln) through the transamidation of misacylated Asp-tRNA(Asn) or Glu-tRNA(Gln) in organisms which lack either or both of asparaginyl-tRNA or glutaminyl-tRNA synthetases. The reaction takes place in the presence of glutamine and ATP through an activated phospho-Asp-tRNA(Asn) or phospho-Glu-tRNA(Gln). The sequence is that of Aspartyl/glutamyl-tRNA(Asn/Gln) amidotransferase subunit C from Roseobacter denitrificans (strain ATCC 33942 / OCh 114) (Erythrobacter sp. (strain OCh 114)).